A 152-amino-acid polypeptide reads, in one-letter code: Ubiquitin-conjugating enzyme E2 N (152 aa).

Residues Gly-3 to Met-149 enclose the UBC core domain. Lys-82 carries the N6-acetyllysine modification. The Glycyl thioester intermediate role is filled by Cys-87. Lys-92 is covalently cross-linked (Glycyl lysine isopeptide (Lys-Gly) (interchain with G-Cter in ISG15)).

The protein belongs to the ubiquitin-conjugating enzyme family. Heterodimer with UBE2V2. Interacts (UBE2V2-UBE2N heterodimer) with the E3 ligase STUB1 (via the U-box domain); the complex has a specific 'Lys-63'-linked polyubiquitination activity. Interacts with RNF8 and RNF168. Interacts with RNF11. Interacts with the E3 ligases, HLTF and SHPRH; the interactions promote the 'Lys-63'-linked polyubiquitination of PCNA upon genotoxic stress and lead to DNA repair. Interacts with ARIH2 (via RING-type 2). Interacts with OTUB1; leading to inhibit E2-conjugating activity. Interacts with GPS2; leading to inhibit E2-conjugating activity. Interacts with RIGI and RNF135; involved in RIGI ubiquitination and activation. Post-translationally, conjugation to ISG15 impairs formation of the thioester bond with ubiquitin but not interaction with UBE2V2.

It catalyses the reaction S-ubiquitinyl-[E1 ubiquitin-activating enzyme]-L-cysteine + [E2 ubiquitin-conjugating enzyme]-L-cysteine = [E1 ubiquitin-activating enzyme]-L-cysteine + S-ubiquitinyl-[E2 ubiquitin-conjugating enzyme]-L-cysteine.. Its pathway is protein modification; protein ubiquitination. Activity is inhibited by binding to OTUB1, which prevents 'Lys-63'-linked polyubiquitination. Activity is inhibited by GPS2, leading to prevent 'Lys-63'-linked polyubiquitination. Its function is as follows. The UBE2V1-UBE2N and UBE2V2-UBE2N heterodimers catalyze the synthesis of non-canonical 'Lys-63'-linked polyubiquitin chains. This type of polyubiquitination does not lead to protein degradation by the proteasome. Mediates transcriptional activation of target genes. Plays a role in the control of progress through the cell cycle and differentiation. Plays a role in the error-free DNA repair pathway and contributes to the survival of cells after DNA damage. Acts together with the E3 ligases, HLTF and SHPRH, in the 'Lys-63'-linked poly-ubiquitination of PCNA upon genotoxic stress, which is required for DNA repair. Appears to act together with E3 ligase RNF5 in the 'Lys-63'-linked polyubiquitination of JKAMP thereby regulating JKAMP function by decreasing its association with components of the proteasome and ERAD. Promotes TRIM5 capsid-specific restriction activity and the UBE2V1-UBE2N heterodimer acts in concert with TRIM5 to generate 'Lys-63'-linked polyubiquitin chains which activate the MAP3K7/TAK1 complex which in turn results in the induction and expression of NF-kappa-B and MAPK-responsive inflammatory genes. Together with RNF135 and UB2V1, catalyzes the viral RNA-dependent 'Lys-63'-linked polyubiquitination of RIGI to activate the downstream signaling pathway that leads to interferon beta production. UBE2V1-UBE2N together with TRAF3IP2 E3 ubiquitin ligase mediate 'Lys-63'-linked polyubiquitination of TRAF6, a component of IL17A-mediated signaling pathway. The polypeptide is Ubiquitin-conjugating enzyme E2 N (UBE2N) (Bos taurus (Bovine)).